Here is a 507-residue protein sequence, read N- to C-terminus: Histidine ammonia-lyase (507 aa).

A cross-link (5-imidazolinone (Ala-Gly)) is located at residues 142–144; sequence ASG. At Ser-143 the chain carries 2,3-didehydroalanine (Ser).

The protein belongs to the PAL/histidase family. Contains an active site 4-methylidene-imidazol-5-one (MIO), which is formed autocatalytically by cyclization and dehydration of residues Ala-Ser-Gly.

The protein localises to the cytoplasm. It catalyses the reaction L-histidine = trans-urocanate + NH4(+). It participates in amino-acid degradation; L-histidine degradation into L-glutamate; N-formimidoyl-L-glutamate from L-histidine: step 1/3. The sequence is that of Histidine ammonia-lyase from Symbiobacterium thermophilum (strain DSM 24528 / JCM 14929 / IAM 14863 / T).